The primary structure comprises 671 residues: Amidase chry2 (671 aa).

Cysteine 2 serves as the catalytic Nucleophile. The Glutamine amidotransferase type-2 domain occupies 2-220; the sequence is CGISAFITHP…PGHYLICRPN (219 aa). The region spanning 251–639 is the Asparagine synthetase domain; the sequence is VRERLLEAVR…TQDAMDGAFN (389 aa).

It belongs to the asparagine synthetase family.

It functions in the pathway pigment biosynthesis. In terms of biological role, amidase; part of the gene cluster that mediates the biosynthesis of the yellow pigment chrysogine. Pyruvic acid and anthranilic acid are likely substrates for the nonribosomal peptide synthetase chry1/NRPS14, with pyruvic acid adenylated by the first A domain and anthranilic acid by the second. If pyruvic acid and anthranilic acid are merged and released from chry1/NRPS14 by hydrolysis, a subsequent amidation would lead to 2-pyruvoylaminobenzamide. This process is probably catalyzed by the amidotransferase chry2 using glutamine as amino donor. The dehydrogenase chry5 that has a terminal berberine bridge domain for C-N cyclization could catalyze the cyclization of 2-pyruvoylaminobenzamide to yield acetyl-4(3H)-quinazolidinone. A final reduction of acetyl-4(3H)-quinazolidinone catalyzed by the oxidoreductase chry4 would result in chrysogine. In Gibberella zeae (strain ATCC MYA-4620 / CBS 123657 / FGSC 9075 / NRRL 31084 / PH-1) (Wheat head blight fungus), this protein is Amidase chry2.